We begin with the raw amino-acid sequence, 220 residues long: Uracil-DNA glycosylase (220 aa).

The Proton acceptor role is filled by D60.

It belongs to the uracil-DNA glycosylase (UDG) superfamily. UNG family.

The protein resides in the cytoplasm. It catalyses the reaction Hydrolyzes single-stranded DNA or mismatched double-stranded DNA and polynucleotides, releasing free uracil.. Its function is as follows. Excises uracil residues from the DNA which can arise as a result of misincorporation of dUMP residues by DNA polymerase or due to deamination of cytosine. The sequence is that of Uracil-DNA glycosylase from Francisella tularensis subsp. novicida (strain U112).